Here is a 131-residue protein sequence, read N- to C-terminus: Histone H2B.2 (131 aa).

Residues 1–19 show a composition bias toward basic and acidic residues; the sequence is MSSAAEKKPASKAPAEKKP. The disordered stretch occupies residues 1-37; it reads MSSAAEKKPASKAPAEKKPAAKKTSTSVDGKKRSKVR. N6-acetyllysine; alternate occurs at positions 7 and 8. Glycyl lysine isopeptide (Lys-Gly) (interchain with G-Cter in SUMO); alternate cross-links involve residues Lys-7 and Lys-8. A Phosphoserine modification is found at Ser-11. The residue at position 12 (Lys-12) is an N6-acetyllysine. An N6-acetyllysine; alternate mark is found at Lys-17, Lys-18, Lys-22, and Lys-23. Residues Lys-17 and Lys-18 each participate in a glycyl lysine isopeptide (Lys-Gly) (interchain with G-Cter in SUMO); alternate cross-link. Lys-22 bears the N6-butyryllysine; alternate mark. Lys-23 is modified (N6-methyllysine; alternate). Lys-35 is subject to N6-succinyllysine. At Lys-38 the chain carries N6,N6-dimethyllysine. Lys-47 is modified (N6-succinyllysine). A Glycyl lysine isopeptide (Lys-Gly) (interchain with G-Cter in ubiquitin) cross-link involves residue Lys-124.

It belongs to the histone H2B family. In terms of assembly, the nucleosome is a histone octamer containing two molecules each of H2A, H2B, H3 and H4 assembled in one H3-H4 heterotetramer and two H2A-H2B heterodimers. The octamer wraps approximately 147 bp of DNA. Interacts with NAP1. In terms of processing, monoubiquitinated by the RAD6/UBC2-BRE1 complex to form H2BK123ub1. H2BK123ub1 gives a specific tag for epigenetic transcriptional activation and is also prerequisite for H3K4me and H3K79me formation. H2BK123ub1 also modulates the formation of double-strand breaks during meiosis and is a prerequisite for DNA-damage checkpoint activation. Deubiquitination is performed by UBP8 in presence of SGF11. Post-translationally, phosphorylated by STE20 to form H2BS10ph during progression through meiotic prophase. May be correlated with chromosome condensation. H2BS10ph is also formed after H(2)O(2) treatment, and is a step leading to apoptosis. Acetylated by GCN5, a component of the SAGA complex, to form H2BK11ac and H2BK16ac. H2BK16ac can also be formed by ESA1, a component of the NuA4 histone acetyltransferase (HAT) complex. Acetylation of N-terminal lysines and particularly formation of H2BK11acK16ac has a positive effect on transcription. In terms of processing, sumoylation to form H2BK6su or H2BK7su, and probably also H2BK16su or H2BK17su, occurs preferentially near the telomeres and represses gene transcription.

It is found in the nucleus. It localises to the chromosome. Core component of nucleosome. Nucleosomes wrap and compact DNA into chromatin, limiting DNA accessibility to the cellular machineries which require DNA as a template. Histones thereby play a central role in transcription regulation, DNA repair, DNA replication and chromosomal stability. DNA accessibility is regulated via a complex set of post-translational modifications of histones, also called histone code, and nucleosome remodeling. The protein is Histone H2B.2 (HTB2) of Saccharomyces cerevisiae (strain ATCC 204508 / S288c) (Baker's yeast).